We begin with the raw amino-acid sequence, 429 residues long: MRAELNKGLIDFLKASPTPFHATATLVQHFEAAGFQRLDERDTWAVETGGRYFVTRNDSSIVAFRMGRQSPLSGGIRMVGAHTDSPCLRVKPQPELQRQGFWQLGVEVYGGALLAPWFDRDLSLAGRVTFRRDGKVESQLIDFKLPIAVIPNLAIHLNRTANEGWAINAQNELPPILAQVAGDERADFRALLTDQLAREHGLNADVVLDYELSFYDTQGAAVVGLNGDFLAGARLDNLLSCFAGMQALLNTESDETALLVCTDHEEVGSSSACGADGAMLEQIVQRLLPSSEDYVRTIQKSLLISADNAHGIHPNYADKHDANHGPKLNAGPVIKVNSNQRYATNSETAGFFRHLCMAEEVPVQSFVVRSDMGCGSTIGPITASHLGIRTVDIGLPTFAMHSIRELAGSHDLAHLVKVLSAFYASHELP.

Positions 82, 156, and 401 each coordinate Zn(2+).

The protein belongs to the peptidase M18 family. It depends on Zn(2+) as a cofactor.

The protein is Probable M18 family aminopeptidase 2 of Pseudomonas syringae pv. syringae (strain B728a).